The primary structure comprises 218 residues: Protein N-lysine methyltransferase METTL21A (218 aa).

S-adenosyl-L-methionine-binding positions include Trp47, 73–75 (GAG), Asp94, Trp125, and Ala143.

It belongs to the methyltransferase superfamily. METTL21 family. In terms of assembly, interacts with heat shock 70 family members; at least some of these proteins are methylation substrates.

It is found in the cytoplasm. It carries out the reaction L-lysyl-[protein] + 3 S-adenosyl-L-methionine = N(6),N(6),N(6)-trimethyl-L-lysyl-[protein] + 3 S-adenosyl-L-homocysteine + 3 H(+). Functionally, protein-lysine methyltransferase that selectively trimethylates residues in heat shock protein 70 (HSP70) family members. Contributes to the in vivo trimethylation of Lys residues in HSPA1 and HSPA8. In vitro methylates 'Lys-561' in HSPA1, 'Lys-564' in HSPA2, 'Lys-585' in HSPA5, 'Lys-563' in HSPA6 and 'Lys-561' in HSPA8. In Bos taurus (Bovine), this protein is Protein N-lysine methyltransferase METTL21A (METTL21A).